A 345-amino-acid polypeptide reads, in one-letter code: METFVCLFKDSPQQRSDAWHAVRHTQVGGSDLASILGLNPYKSYYITLAEKANLFKKNLNRAACSWGTLFERVSKDLLELFCQTTVIGDNIHIDGTYLGYPGHSNSPDGFCYLTLGYTQQSWEIKTIFNNVCYEATKRIPVLVEIKSPYNRKIKNSVPSYYMPQIQSGLALSPPISMGIYVEAMFRVCGIHQLGWNSETNIDIHPPESMLPLAWGIITICSTQEHTEAPQDFGTLDAETFRQLLETLYQKDQYTIHYSMPYETACPEMPNVVGYFGWKVFIFQIIPVMKHPQFLKDKYPIIQQFLRDLHTIKASPSPMETYEKICCSEESPLSTEDIDNFTDMLT.

This sequence belongs to the asfivirus D345L family. Interacts with IKKA/CHUK and IKBKB.

It localises to the host cytoplasm. Plays a role in the negative regulation of host NF-kappa-B signaling pathway. Mechanistically, recruits IKKA/CHUK and IKBKB to suppress their kinase activity towards NFKBIA. The sequence is that of Protein D345L from African swine fever virus (isolate Tick/South Africa/Pretoriuskop Pr4/1996) (ASFV).